Here is a 665-residue protein sequence, read N- to C-terminus: PR5-like receptor kinase (665 aa).

A signal peptide spans methionine 1–serine 24. Residues arginine 25 to lysine 276 are Extracellular-facing. Residues asparagine 26 and asparagine 88 are each glycosylated (N-linked (GlcNAc...) asparagine). Cystine bridges form between cysteine 33-cysteine 249, cysteine 81-cysteine 91, cysteine 96-cysteine 103, cysteine 153-cysteine 238, cysteine 158-cysteine 221, cysteine 166-cysteine 184, cysteine 188-cysteine 197, and cysteine 198-cysteine 208. An N-linked (GlcNAc...) asparagine glycan is attached at asparagine 163. Asparagine 233 is a glycosylation site (N-linked (GlcNAc...) asparagine). A helical transmembrane segment spans residues leucine 277 to valine 297. The Cytoplasmic segment spans residues arginine 298–serine 665. Positions asparagine 331–leucine 620 constitute a Protein kinase domain. Residues leucine 337–valine 345 and lysine 360 each bind ATP. Aspartate 455 functions as the Proton acceptor in the catalytic mechanism.

In the N-terminal section; belongs to the thaumatin family. It in the C-terminal section; belongs to the protein kinase superfamily. Ser/Thr protein kinase family. Autophosphorylated in vitro. Expressed in roots. Expressed at low levels in stems.

The protein resides in the membrane. The enzyme catalyses L-seryl-[protein] + ATP = O-phospho-L-seryl-[protein] + ADP + H(+). The catalysed reaction is L-threonyl-[protein] + ATP = O-phospho-L-threonyl-[protein] + ADP + H(+). Its function is as follows. Possesses kinase activity in vitro. This chain is PR5-like receptor kinase, found in Arabidopsis thaliana (Mouse-ear cress).